We begin with the raw amino-acid sequence, 190 residues long: Vascular endothelial growth factor A (190 aa).

Residues 1–26 (MNFLLSWVHWTLALLLYLHHAKWSQA) form the signal peptide. Intrachain disulfides connect Cys-51–Cys-93, Cys-82–Cys-127, and Cys-86–Cys-129. An N-linked (GlcNAc...) asparagine glycan is attached at Asn-100.

Belongs to the PDGF/VEGF growth factor family. In terms of assembly, homodimer; disulfide-linked. Also found as heterodimer with PGF. Interacts with NRP1. Interacts with isoform 2 of BSG. Interacts with CD82; this interaction inhibits VEGFA-mediated signaling pathway.

The protein localises to the secreted. In terms of biological role, growth factor active in angiogenesis, vasculogenesis and endothelial cell growth. Induces endothelial cell proliferation, promotes cell migration, inhibits apoptosis and induces permeabilization of blood vessels. Binds to the FLT1/VEGFR1 and KDR/VEGFR2 receptors, heparan sulfate and heparin. Binding to NRP1 receptor initiates a signaling pathway needed for motor neuron axon guidance and cell body migration, including for the caudal migration of facial motor neurons from rhombomere 4 to rhombomere 6 during embryonic development. Also binds the DEAR/FBXW7-AS1 receptor. This chain is Vascular endothelial growth factor A (VEGFA), found in Mesocricetus auratus (Golden hamster).